A 255-amino-acid chain; its full sequence is Alpha-acetolactate decarboxylase (255 aa).

It belongs to the alpha-acetolactate decarboxylase family.

It carries out the reaction (2S)-2-acetolactate + H(+) = (R)-acetoin + CO2. It functions in the pathway polyol metabolism; (R,R)-butane-2,3-diol biosynthesis; (R,R)-butane-2,3-diol from pyruvate: step 2/3. Its function is as follows. Converts acetolactate into acetoin, which can be excreted by the cells. This may be a mechanism for controlling the internal pH of cells in the stationary stage. In Bacillus subtilis (strain 168), this protein is Alpha-acetolactate decarboxylase (alsD).